Consider the following 163-residue polypeptide: MATYEGKVFTEEQEALVVKSWTVMKKKTAELGLKFFLKIFEIAPSAKKLFSFLRDSNVPLEQNTKLKPHAMSVFVMTCESAVQLRKAGKVTVRESNLKKLGATHFKYGVVDEHFEVTKFALLETIKEAVPDMWSDEMKNAWGEAYDRLVAAIKIEMKACSQAA.

Residues Val-8 to Lys-157 enclose the Globin domain. A Homodimerization motif is present at residues Glu-41–Ser-45. Residues Ser-51, Lys-65, His-69, Lys-99, Thr-103, and His-104 each contribute to the heme b site. The Homodimerization signature appears at Asp-111 to Glu-123.

Belongs to the plant globin family. Homodimer. Heme b is required as a cofactor.

Its subcellular location is the cytoplasm. The protein localises to the nucleus. It catalyses the reaction Fe(III)-heme b-[protein] + nitric oxide + H2O = Fe(II)-heme b-[protein] + nitrite + 2 H(+). Its function is as follows. Phytoglobin that reduces nitrite to nitric oxide (NO) under anoxic conditions (e.g. during flooding or in waterlogged soil). May not function as an oxygen storage or transport protein. Has an unusually high affinity for O(2) through an hexacoordinate heme iron because of a very low dissociation constant. The sequence is that of Anaerobic nitrite reductase HB1 from Gossypium hirsutum (Upland cotton).